The following is a 729-amino-acid chain: Polyribonucleotide nucleotidyltransferase (729 aa).

Residues aspartate 516 and aspartate 522 each coordinate Mg(2+). One can recognise a KH domain in the interval 581–641; that stretch reads PSTEHFSINP…EKVAAAKEHI (61 aa). The 68-residue stretch at 658 to 725 folds into the S1 motif domain; sequence GKTYVGKVKK…KGKKVELATP (68 aa).

Belongs to the polyribonucleotide nucleotidyltransferase family. Mg(2+) serves as cofactor.

It localises to the cytoplasm. The catalysed reaction is RNA(n+1) + phosphate = RNA(n) + a ribonucleoside 5'-diphosphate. Functionally, involved in mRNA degradation. Catalyzes the phosphorolysis of single-stranded polyribonucleotides processively in the 3'- to 5'-direction. This Sulfurovum sp. (strain NBC37-1) protein is Polyribonucleotide nucleotidyltransferase.